Here is a 415-residue protein sequence, read N- to C-terminus: Mulatexin (415 aa).

The N-terminal stretch at 1–21 (MKFRTLLIIFSLVFLLEIVSA) is a signal peptide. Residues 23 to 66 (EPQCGRDAGGALCHGNLCCSHWGFCGTTAIYCDVDQGCQSQCWS) enclose the Chitin-binding type-1 1 domain. Intrachain disulfides connect Cys26-Cys41, Cys35-Cys47, Cys40-Cys54, and Cys60-Cys64. A disordered region spans residues 65–127 (WSSPPPPSPP…PGGPERPDHR (63 aa)). The span at 67–121 (SPPPPSPPPPPPSPPPPSPPPPSPPPPSPPPPSPPPPSPPPPSPPPPSPPPPGGP) shows a compositional bias: pro residues. The 43-residue stretch at 125 to 167 (DHRCGRALGNPPCNPGRCCSIHNWCGSTAAYCRGSSCQYQCWN) folds into the Chitin-binding type-1 2 domain. Intrachain disulfides connect Cys128–Cys143, Cys137–Cys149, Cys142–Cys156, and Cys161–Cys165. N-linked (GlcNAc...) asparagine glycosylation is present at Asn264.

In terms of processing, glycosylated.

It localises to the secreted. In terms of biological role, chitin-binding protein which slows larval growth when consumed by the lepidopteran species S.ricini and M.brassica, but not when consumed by the mulberry specialist B.mori. Lacks chitinase activity. In Morus alba (White mulberry), this protein is Mulatexin.